A 562-amino-acid chain; its full sequence is Arginine--tRNA ligase (562 aa).

The short motif at Ala126–His136 is the 'HIGH' region element.

Belongs to the class-I aminoacyl-tRNA synthetase family. Monomer.

The protein resides in the cytoplasm. The enzyme catalyses tRNA(Arg) + L-arginine + ATP = L-arginyl-tRNA(Arg) + AMP + diphosphate. The sequence is that of Arginine--tRNA ligase from Salinibacter ruber (strain DSM 13855 / M31).